We begin with the raw amino-acid sequence, 258 residues long: Spindlin-2A (258 aa).

Residues 1 to 23 are compositionally biased toward low complexity; sequence MKTPNAQEAEGQQTRAAAGRATG. Positions 1 to 49 are disordered; sequence MKTPNAQEAEGQQTRAAAGRATGSANMTKKKVSQKKQRGRPSSQPRRNI. Residues 28-39 show a composition bias toward basic residues; it reads TKKKVSQKKQRG. Tudor-like domain regions lie at residues 50-99, 129-178, and 210-255; these read VGCR…LELH, IGKA…YQLL, and IGKH…YDLV. Histone H3K4me3 and H3R8me2a binding regions lie at residues glutamate 138 and 246–248; that span reads DFH.

It belongs to the SPIN/STSY family. In terms of assembly, interacts with C11orf84/SPINDOC.

It localises to the nucleus. In terms of biological role, may be involved in the regulation of cell cycle progression. Exhibits H3K4me3-binding activity. In Homo sapiens (Human), this protein is Spindlin-2A (SPIN2A).